The chain runs to 266 residues: uncharacterized protein (266 aa).

Position 176 is a phosphoserine (serine 176). Phosphothreonine is present on threonine 178.

This is an uncharacterized protein from Schizosaccharomyces pombe (strain 972 / ATCC 24843) (Fission yeast).